Reading from the N-terminus, the 196-residue chain is Pyridoxal 5'-phosphate synthase subunit PdxT (196 aa).

46 to 48 (GES) is a binding site for L-glutamine. The active-site Nucleophile is the Cys-78. L-glutamine contacts are provided by residues Arg-105 and 134-135 (IR). Residues His-170 and Glu-172 each act as charge relay system in the active site.

The protein belongs to the glutaminase PdxT/SNO family. As to quaternary structure, in the presence of PdxS, forms a dodecamer of heterodimers. Only shows activity in the heterodimer.

It carries out the reaction aldehydo-D-ribose 5-phosphate + D-glyceraldehyde 3-phosphate + L-glutamine = pyridoxal 5'-phosphate + L-glutamate + phosphate + 3 H2O + H(+). The enzyme catalyses L-glutamine + H2O = L-glutamate + NH4(+). The protein operates within cofactor biosynthesis; pyridoxal 5'-phosphate biosynthesis. Functionally, catalyzes the hydrolysis of glutamine to glutamate and ammonia as part of the biosynthesis of pyridoxal 5'-phosphate. The resulting ammonia molecule is channeled to the active site of PdxS. The sequence is that of Pyridoxal 5'-phosphate synthase subunit PdxT from Pelotomaculum thermopropionicum (strain DSM 13744 / JCM 10971 / SI).